The following is a 478-amino-acid chain: Proline--tRNA ligase (478 aa).

This sequence belongs to the class-II aminoacyl-tRNA synthetase family. ProS type 3 subfamily. As to quaternary structure, homodimer.

Its subcellular location is the cytoplasm. It catalyses the reaction tRNA(Pro) + L-proline + ATP = L-prolyl-tRNA(Pro) + AMP + diphosphate. In terms of biological role, catalyzes the attachment of proline to tRNA(Pro) in a two-step reaction: proline is first activated by ATP to form Pro-AMP and then transferred to the acceptor end of tRNA(Pro). The polypeptide is Proline--tRNA ligase (Clostridium botulinum (strain 657 / Type Ba4)).